Reading from the N-terminus, the 341-residue chain is Holliday junction branch migration complex subunit RuvB (341 aa).

Positions 3-184 (DDFDIRDARM…FGINMHLEYY (182 aa)) are large ATPase domain (RuvB-L). Residues Leu23, Arg24, Gly65, Lys68, Thr69, Thr70, 131–133 (EDY), Arg174, Tyr184, and Arg221 each bind ATP. Thr69 lines the Mg(2+) pocket. Positions 185–255 (DMETLTKIVL…IACFSLEALN (71 aa)) are small ATPAse domain (RuvB-S). The head domain (RuvB-H) stretch occupies residues 258-341 (RYGLDQIDNK…RVGEQGFLFD (84 aa)). DNA-binding residues include Arg313 and Arg318.

Belongs to the RuvB family. Homohexamer. Forms an RuvA(8)-RuvB(12)-Holliday junction (HJ) complex. HJ DNA is sandwiched between 2 RuvA tetramers; dsDNA enters through RuvA and exits via RuvB. An RuvB hexamer assembles on each DNA strand where it exits the tetramer. Each RuvB hexamer is contacted by two RuvA subunits (via domain III) on 2 adjacent RuvB subunits; this complex drives branch migration. In the full resolvosome a probable DNA-RuvA(4)-RuvB(12)-RuvC(2) complex forms which resolves the HJ.

It is found in the cytoplasm. The enzyme catalyses ATP + H2O = ADP + phosphate + H(+). Its function is as follows. The RuvA-RuvB-RuvC complex processes Holliday junction (HJ) DNA during genetic recombination and DNA repair, while the RuvA-RuvB complex plays an important role in the rescue of blocked DNA replication forks via replication fork reversal (RFR). RuvA specifically binds to HJ cruciform DNA, conferring on it an open structure. The RuvB hexamer acts as an ATP-dependent pump, pulling dsDNA into and through the RuvAB complex. RuvB forms 2 homohexamers on either side of HJ DNA bound by 1 or 2 RuvA tetramers; 4 subunits per hexamer contact DNA at a time. Coordinated motions by a converter formed by DNA-disengaged RuvB subunits stimulates ATP hydrolysis and nucleotide exchange. Immobilization of the converter enables RuvB to convert the ATP-contained energy into a lever motion, pulling 2 nucleotides of DNA out of the RuvA tetramer per ATP hydrolyzed, thus driving DNA branch migration. The RuvB motors rotate together with the DNA substrate, which together with the progressing nucleotide cycle form the mechanistic basis for DNA recombination by continuous HJ branch migration. Branch migration allows RuvC to scan DNA until it finds its consensus sequence, where it cleaves and resolves cruciform DNA. The protein is Holliday junction branch migration complex subunit RuvB of Parabacteroides distasonis (strain ATCC 8503 / DSM 20701 / CIP 104284 / JCM 5825 / NCTC 11152).